The sequence spans 858 residues: MASYTPMIQQYLNIKAEYQDAFLFFRLGDFYEMFFDDAKEASQELEITLTSRDGGTIPMCGVPYHSASAYIEQLISKGYKVAICEQVEDPKTAKGVVKREVVQLITPGTVMEGKGLSENENNFIASVTKFENGYGLALSDLSTGENMAAFIDRLDEVVSEIYSVGAKEIVVSKHLDEETVKTLKERCQATISYEDSDELIDEAERLVSRLSEQLRSTFLTLYAYLRRTQKRSLDHLQQVQVFELEQTMKIDLYSKRNLELTETIRSKSKKGSLLWLLDETKTAMGGRLLKQWIDRPLIRLSHIKERQEMVQILMDHFFEREDLRERLKQVYDLERLAGRVAFGNVNARDLIQLKESLKQVPAIKELVHSLPEEMAKSRANDIDLCDDLLNLLEDALYENPPMTLKEGNLIKDGYNAKLDEYRDASRNGKDWIARLEQQEREYTGIRSLKVGFNKVFGYYIEVTRANTHLLEEGRYERKQTLANAERYITPELKEKEALILEAESNISELEYELFAALREQVKVYIPRLQLLAKQMSELDALQCFATVSEKRRYIRPEFSEDEVDVIDGRHPVVEKVMDHQEYVPNDCHMGNGRQTLLITGPNMSGKSTYMRQMALISILAQIGCFVPASKATLPIFDQIFTRIGAADDLISGQSTFMVEMLEAKNAMVHATKNSLILFDEIGRGTSTYDGMALAQAIIEFVHDHVGAKTLFSTHYHELTVLESQLSELKNVHVRAEEHEGTVVFLHQIKEGAADKSYGIHVAQLAELPDAIIDRAQTILTELESGSHEVTPHVSAAPKTEKAEEKQQLSFFEVEEKPQTKPVLKQKDQAVIEELKSFNLMDMTPLEAMTKLYELQKKL.

600-607 (GPNMSGKS) serves as a coordination point for ATP.

The protein belongs to the DNA mismatch repair MutS family.

Functionally, this protein is involved in the repair of mismatches in DNA. It is possible that it carries out the mismatch recognition step. This protein has a weak ATPase activity. The chain is DNA mismatch repair protein MutS from Bacillus pumilus (strain SAFR-032).